The sequence spans 703 residues: Subtilisin-like protease SBT4.7 (703 aa).

A signal peptide spans 1 to 19 (MAKRDYFCFVVLFLSSVSA). The propeptide at 20–107 (VIDDPQNKQV…VFPNINYKLQ (88 aa)) is activation peptide. An Inhibitor I9 domain is found at 29 to 106 (VYVVYMGSLP…SVFPNINYKL (78 aa)). In terms of domain architecture, Peptidase S8 spans 111–556 (SWDFLGLKEG…AGHVDQIAAI (446 aa)). Aspartate 139 functions as the Charge relay system in the catalytic mechanism. An N-linked (GlcNAc...) asparagine glycan is attached at asparagine 170. The Charge relay system role is filled by histidine 194. N-linked (GlcNAc...) asparagine glycans are attached at residues asparagine 217, asparagine 360, asparagine 416, and asparagine 433. Positions 350 to 411 (KYPLVYGDNF…LLPPDDFDSL (62 aa)) constitute a PA domain. Catalysis depends on serine 495, which acts as the Charge relay system. Asparagine 577, asparagine 615, and asparagine 633 each carry an N-linked (GlcNAc...) asparagine glycan.

This sequence belongs to the peptidase S8 family. Post-translationally, the C-terminal propeptide is autocleaved.

The protein resides in the secreted. This is Subtilisin-like protease SBT4.7 from Arabidopsis thaliana (Mouse-ear cress).